Reading from the N-terminus, the 1004-residue chain is Centriolar coiled-coil protein of 110 kDa (1004 aa).

A CEP97 binding region spans residues 1–221 (MEEYEEFCEK…SCLAEVTPDP (221 aa)). Residues 51–90 (EKRKKIQEEKQKALDVQSRKQANRKKALLTRVQEILENVQ) are a coiled coil. Positions 64–82 (LDVQSRKQANRKKALLTRV) are calmodulin-binding. The segment at 67–82 (QSRKQANRKKALLTRV) is required for interaction with CEP290. Disordered stretches follow at residues 147-194 (PVNN…SSAS) and 239-279 (RELS…APPM). Residue serine 170 is modified to Phosphoserine. Low complexity predominate over residues 243–252 (SRSLRNSLKR). Over residues 253–276 (SVNETHSDRENDAAKASDCVKEKA) the composition is skewed to basic and acidic residues. An interaction with CEP76 region spans residues 349–564 (ENKVKSLKGP…QTQTSRQQMD (216 aa)). Phosphoserine is present on residues serine 364, serine 370, and serine 398. The tract at residues 401–433 (GKEEAVDRTAPAAAETTNESETVPKSPTDLTGV) is disordered. Residues 415–433 (ETTNESETVPKSPTDLTGV) are compositionally biased toward polar residues. Position 550 is a phosphoserine (serine 550). Residues 641–699 (QELLKSKMLAFEEMRKRLEEQHAQQLSLLIAEQEREQEQLQKEIEEQEKMLKEKAVTTD) adopt a coiled-coil conformation. 2 calmodulin-binding regions span residues 773-813 (GRAQ…DKLK) and 901-916 (VALSVATQKSLDRKKF). Residues 955-1004 (LSRQGTPKTSVKGVVQNRQKPSQSRVPNRAPVSGAYAGKTQRKRPNVATI) form a disordered region. A compositionally biased stretch (polar residues) spans 970–980 (QNRQKPSQSRV). A compositionally biased stretch (basic residues) spans 994–1004 (TQRKRPNVATI).

As to quaternary structure, interacts with CALM1, CETN2, CEP76, CEP104, CEP290 and TALPID3. Interacts with CEP97. Seems to associate with discrete CETN2, CEP97 and CEP290-containing complexes. Interacts with NEURL4 and CCNF; these interactions are not mutually exclusive and both lead to CCP110 ubiquitination and proteasome-dependent degradation. Via its interaction with NEURL4, may indirectly interact with HERC2. Interacts with KIF24, leading to its recruitment to centrioles. Interacts with USP20 and USP33. Interacts with MPHOSPH9. Interacts (via N-terminal region) with ENKD1 (via central region); ENKD1 competes with CEP97 for binding to CCP110, destabilizing the interaction between CP110 and CEP97 which promotes the removal of CCP110 and CEP97 from the mother centriole and allows the initiation of ciliogenesis. Phosphorylated by CDKs. Post-translationally, ubiquitinated by the SCF(CCNF) during G2 phase, leading to its degradation by the proteasome and preventing centrosome reduplication. Deubiquitinated by USP33 in S and G2/M phase, leading to stabilize CCP110 during the period which centrioles duplicate and elongate. Ubiquitinated by the EDVP complex, leading to its degradation.

It is found in the cytoplasm. It localises to the cytoskeleton. The protein resides in the microtubule organizing center. The protein localises to the centrosome. Its subcellular location is the centriole. It is found in the cilium basal body. Necessary for centrosome duplication at different stages of procentriole formation. Acts as a key negative regulator of ciliogenesis in collaboration with CEP97 by capping the mother centriole thereby preventing cilia formation. Also involved in promoting ciliogenesis. May play a role in the assembly of the mother centriole subdistal appendages (SDA) thereby effecting the fusion of recycling endosomes to basal bodies during cilia formation. Required for correct spindle formation and has a role in regulating cytokinesis and genome stability via cooperation with CALM1 and CETN2. The protein is Centriolar coiled-coil protein of 110 kDa (Ccp110) of Mus musculus (Mouse).